Reading from the N-terminus, the 250-residue chain is Octanoyltransferase (250 aa).

The BPL/LPL catalytic domain maps to 44 to 224 (GAGSDRLLLL…AVVQALNGDL (181 aa)). Residues 82–89 (RGGKITWH), 154–156 (AIG), and 167–169 (GIS) contribute to the substrate site. Cysteine 185 (acyl-thioester intermediate) is an active-site residue. Residues 224–250 (LPVRDHDLPRPGTTPAAPNSTRVRSMT) are disordered. Over residues 239 to 250 (AAPNSTRVRSMT) the composition is skewed to polar residues.

This sequence belongs to the LipB family.

The protein localises to the cytoplasm. The catalysed reaction is octanoyl-[ACP] + L-lysyl-[protein] = N(6)-octanoyl-L-lysyl-[protein] + holo-[ACP] + H(+). It participates in protein modification; protein lipoylation via endogenous pathway; protein N(6)-(lipoyl)lysine from octanoyl-[acyl-carrier-protein]: step 1/2. In terms of biological role, catalyzes the transfer of endogenously produced octanoic acid from octanoyl-acyl-carrier-protein onto the lipoyl domains of lipoate-dependent enzymes. Lipoyl-ACP can also act as a substrate although octanoyl-ACP is likely to be the physiological substrate. This is Octanoyltransferase from Nocardia farcinica (strain IFM 10152).